A 432-amino-acid polypeptide reads, in one-letter code: MTDALNTKRSEEIFGAAKNLMPGGVSSPVRAFKSVEGDPIVFDRVKGPYAWDVDGNRYIDYVGSWGPAICGHAHPEVIAALQETLEKGTSFGAPCVLENQLAEMVIDAVPSVEMVRFVNSGTEACMAVLRLMRAFTGRDKVIKFEGCYHGHADMFLVKAGSGVATLGLPDSPGVPRSTTANTLTAPYNDLEAVKELFAENPDAISGVILEPVVGNAGFITPEPGFLEGLREVTQENGALLVFDEVMTGFRISYGGAQERFGVTPDLTTMGKVIGGGLPVGAYGGRKEIMSMVSPSGPMYQAGTLSGNPLAMTAGIKTLELLKQEGTYEKLEAITKKLLDGILTAAKESNIPIYGQSISAMFGFYLCEGPVRNFEEAKSSDTELFSKIHRLMLQKGVYLAPSAFEAGFTSLAHSEDDINATIKAFKEIFSEMS.

Lys271 is modified (N6-(pyridoxal phosphate)lysine).

It belongs to the class-III pyridoxal-phosphate-dependent aminotransferase family. HemL subfamily. In terms of assembly, homodimer. Pyridoxal 5'-phosphate serves as cofactor.

The protein localises to the cytoplasm. It catalyses the reaction (S)-4-amino-5-oxopentanoate = 5-aminolevulinate. It functions in the pathway porphyrin-containing compound metabolism; protoporphyrin-IX biosynthesis; 5-aminolevulinate from L-glutamyl-tRNA(Glu): step 2/2. Its pathway is porphyrin-containing compound metabolism; chlorophyll biosynthesis. The polypeptide is Glutamate-1-semialdehyde 2,1-aminomutase (Prochlorococcus marinus (strain NATL2A)).